Here is a 175-residue protein sequence, read N- to C-terminus: Regenerating islet-derived protein 3-beta (175 aa).

The N-terminal stretch at 1 to 26 (MLPPTACSVMSWMLLSCLMLLSQVQG) is a signal peptide. Positions 27 to 37 (EDSLKNIPSAR) are excised as a propeptide. 3 cysteine pairs are disulfide-bonded: Cys40–Cys51, Cys68–Cys171, and Cys146–Cys163. In terms of domain architecture, C-type lectin spans 47-172 (YGSYCYALFQ…CEVKLPYVCK (126 aa)). His107 provides a ligand contact to Zn(2+). The EPN motif lies at 114–116 (EPN). Residue Glu121 participates in Zn(2+) binding.

Forms a hexameric membrane-permeabilizing oligomeric pore on membrane phospholipids. The hexamer is formed by three dimers related by helical symmetry. Forms filaments, filamentation traps pore complexes and limits damage to host cells. Interacts with EXTL3. Post-translationally, proteolytic processing by trypsin removes an inhibitory N-terminal propeptide and is essential for peptidoglycan binding and antibacterial activity. Constitutively expressed in the small intestine, moderately in colon and at an extremely low level in healthy pancreas.

The protein resides in the secreted. With respect to regulation, lipopolysaccharide inhibits pore-forming activity, explaining why is bactericidal for Gram-positive but not Gram-negative bacteria. Functionally, bactericidal C-type lectin which acts against several intestinal Gram-positive and Gram-negative bacteria. Lacks antibacterial activity against S.typhimurium. May play a role in protection against infection with S.enteritidis by inhibiting its translocation from the gut lumen into intestinal tissues and further extraintestinal tissues. In terms of biological role, acts as a hormone in response to different stimuli. Secreted by different cell types to activate its receptor EXTL3 and induce cell specific signaling pathways. In pancreas, is able stimulate cell proliferation. This chain is Regenerating islet-derived protein 3-beta, found in Mus musculus (Mouse).